The sequence spans 225 residues: MSQYGFVRVPREVEKAIPVVNAPRPRAVVPPPNSETARLVREYAAKELTAPVLNHSLRVFQYSVAIIRDQFPAWDLDQEVLYVTCLLHDIATTDKNMRATKMSFEYYGGILSRELVFNATGGNQDYADAVTEAIIRHQDLTGTGYITTLGLILQIATTLDNVGSNTDLIHIDTVSAINEQFPRLHWLSCFATVVDTENSRKPWGHTSSLGDDFSKKVICNTFGYN.

One can recognise an HD domain in the interval 52–162 (VLNHSLRVFQ…LQIATTLDNV (111 aa)).

It belongs to the cyanamide dehydrase family. As to quaternary structure, homohexamer. The cofactor is Zn(2+).

It carries out the reaction urea = cyanamide + H2O. In terms of biological role, cyanamide hydratase involved in the detoxification and/or utilization of cyanamide, a toxic nitrile compound distributed widely in the environment. In Saccharomyces cerevisiae (strain ATCC 204508 / S288c) (Baker's yeast), this protein is Cyanamide hydratase DDI2.